A 307-amino-acid chain; its full sequence is Ribosomal RNA small subunit methyltransferase H (307 aa).

S-adenosyl-L-methionine is bound by residues 34–36 (GGH), aspartate 54, phenylalanine 79, aspartate 101, and glutamine 108.

The protein belongs to the methyltransferase superfamily. RsmH family.

It is found in the cytoplasm. It catalyses the reaction cytidine(1402) in 16S rRNA + S-adenosyl-L-methionine = N(4)-methylcytidine(1402) in 16S rRNA + S-adenosyl-L-homocysteine + H(+). In terms of biological role, specifically methylates the N4 position of cytidine in position 1402 (C1402) of 16S rRNA. The polypeptide is Ribosomal RNA small subunit methyltransferase H (Vesicomyosocius okutanii subsp. Calyptogena okutanii (strain HA)).